The following is a 636-amino-acid chain: MGKVVGIDLGTTNSEVAVMQGGEPVVIPSAEGSTLIPSVVAINKNGERIVGRQAKNQAILNPENTVYSIKRFMGRKWGEPAGRELPVEADAKRKPYKVIQGNNNEVRVVMGDKDFSPPEVSAMILQKLKSDAEAYLGEKVTEAVITVPAYFNDAQRQATKDAGAIAGLKVLRIINEPTAAALAYGLDKKKDETIAVYDLGGGTFDISILELGEGTFQVKSTAGDTHLGGDDFDQKIIDWLIAEYKKDQGIDLSKDKTALQRLKEAAEKAKIELSTVQQTEINLPFITADASGPKHLNIILTRSKLEQMVMDLVEKSLEPCRQALKDSGKTSAEINEVILVGGQTRMPLVQQKVKDFFGKEPNKGVNPDEVVAIGAAIQAGVLKGEVSDVLLLDVIPLTLGIETLGGVSTALITRNTTIPTSKSQVFSTAADNQPSVEIHVLQGERPMAADNRTLGRFMLDGILPAPRGVPQIEVTFDIDANGMLSVKAKDKGTGREQKITITASSGLSKEEVEKMTREAEAHAAEDTKRKEEIEARNVADNLAYNAEKTLRDNKDKIPAELNTELESKIAAVRTALQGNDVEAIKKTTQELSTALQSVGSAVYGKQQEGAPAQEEPSAEGKKADDEGTVEGEFREV.

A Phosphothreonine; by autocatalysis modification is found at Thr203. Positions 602–636 (VYGKQQEGAPAQEEPSAEGKKADDEGTVEGEFREV) are disordered. Residues 618-636 (AEGKKADDEGTVEGEFREV) are compositionally biased toward basic and acidic residues.

This sequence belongs to the heat shock protein 70 family.

Its function is as follows. Acts as a chaperone. In Dehalococcoides mccartyi (strain ATCC BAA-2100 / JCM 16839 / KCTC 5957 / BAV1), this protein is Chaperone protein DnaK.